Reading from the N-terminus, the 88-residue chain is Large ribosomal subunit protein bL27 (88 aa).

Residues M1 to R25 are disordered.

The protein belongs to the bacterial ribosomal protein bL27 family.

This Lawsonia intracellularis protein is Large ribosomal subunit protein bL27 (rpmA).